The chain runs to 333 residues: Aspartate carbamoyltransferase catalytic subunit (333 aa).

The carbamoyl phosphate site is built by Arg61 and Thr62. L-aspartate is bound at residue Lys89. Positions 111, 144, and 147 each coordinate carbamoyl phosphate. The L-aspartate site is built by Arg184 and Arg248. Gly289 and Pro290 together coordinate carbamoyl phosphate.

Belongs to the aspartate/ornithine carbamoyltransferase superfamily. ATCase family. In terms of assembly, heterododecamer (2C3:3R2) of six catalytic PyrB chains organized as two trimers (C3), and six regulatory PyrI chains organized as three dimers (R2).

It carries out the reaction carbamoyl phosphate + L-aspartate = N-carbamoyl-L-aspartate + phosphate + H(+). Its pathway is pyrimidine metabolism; UMP biosynthesis via de novo pathway; (S)-dihydroorotate from bicarbonate: step 2/3. Functionally, catalyzes the condensation of carbamoyl phosphate and aspartate to form carbamoyl aspartate and inorganic phosphate, the committed step in the de novo pyrimidine nucleotide biosynthesis pathway. This chain is Aspartate carbamoyltransferase catalytic subunit, found in Trichormus variabilis (strain ATCC 29413 / PCC 7937) (Anabaena variabilis).